Here is a 610-residue protein sequence, read N- to C-terminus: Sodium-coupled monocarboxylate transporter 1 (610 aa).

The Extracellular portion of the chain corresponds to 1–9 (MDTPRGIGT). The chain crosses the membrane as a helical span at residues 10 to 30 (FVVWDYVVFAGMLVISAAIGI). The Cytoplasmic portion of the chain corresponds to 31–51 (YYAFAGGGQQTSKDFLMGGRR). A helical transmembrane segment spans residues 52-72 (MTAVPVALSLTASFMSAVTVL). The Extracellular portion of the chain corresponds to 73-83 (GTPSEVYRFGA). A helical transmembrane segment spans residues 84-104 (IFSIFAFTYFFVVVISAEVFL). The Cytoplasmic segment spans residues 105–132 (PVFYKLGITSTYEYLELRFNKCVRLCGT). A helical membrane pass occupies residues 133-153 (VLFIVQTILYTGIVIYAPALA). Over 154–161 (LNQVTGFD) the chain is Extracellular. Residues 162–182 (LWGAVVATGVVCTFYCTLGGL) traverse the membrane as a helical segment. The Cytoplasmic portion of the chain corresponds to 183–189 (KAVIWTD). A helical transmembrane segment spans residues 190–210 (VFQVGIMVAGFASVIIQAVVM). Over 211–239 (QGGISTILNDAYDGGRLNFWNFNPNPLQR) the chain is Extracellular. Residues 240–260 (HTFWTIIIGGTFTWTSIYGVN) traverse the membrane as a helical segment. Topologically, residues 261-279 (QSQVQRYISCKSRFQAKLS) are cytoplasmic. A helical membrane pass occupies residues 280–300 (LYINLVGLWAILTCSVFCGLA). Over 301-336 (LYSRYHDCDPWTAKKVSAPDQLMPYLVLDILQDYPG) the chain is Extracellular. A helical membrane pass occupies residues 337–359 (LPGLFVACAYSGTLSTVSSSINA). At 360-389 (LAAVTVEDLIKPYFRSLSERSLSWISQGMS) the chain is on the cytoplasmic side. The chain crosses the membrane as a helical span at residues 390–410 (VVYGALCIGMAALASLMGALL). The Extracellular portion of the chain corresponds to 411 to 415 (QAALS). The helical transmembrane segment at 416–436 (VFGMVGGPLMGLFALGILVPF) threads the bilayer. The Cytoplasmic portion of the chain corresponds to 437–439 (ANS). A helical membrane pass occupies residues 440-460 (IGALVGLMAGFAISLWVGIGA). The Extracellular portion of the chain corresponds to 461 to 518 (QIYPPLPERTLPLHLDIQGCNSTYNETNLMTTTEMPFTTSVFQIYNVQRTPLMDNWYS). Asparagine 485 carries N-linked (GlcNAc...) asparagine glycosylation. Residues 519–539 (LSYLYFSTVGTLVTLLVGILV) form a helical membrane-spanning segment. Residues 540–610 (SLSTGGRKQN…QSGKSNGTRL (71 aa)) are Cytoplasmic-facing. Residues 585–610 (GGTDNPAFNHIELNSDQSGKSNGTRL) form a disordered region. Residues 596-610 (ELNSDQSGKSNGTRL) show a composition bias toward polar residues. The PDZ-binding signature appears at 608–610 (TRL).

This sequence belongs to the sodium:solute symporter (SSF) (TC 2.A.21) family. Interacts (via PDZ-binding motif) with PDZK1 (via PDZ domains 1 and 3); interaction increases nicotinate transport activity of SLC5A8. As to expression, expressed in normal thyroid, localized at the apical pole of thyroid cells facing the colloid lumen, but expression profoundly decreased in thyroid carcinomas. Expressed in normal colon but absent in colon aberrant crypt foci and colon cancers. Present in normal kidney cortex, brain, prostate, gastric mucosa and breast tissue but was significantly down-regulated in primary gliomas, gastric cancer, prostate tumors and breast tumors.

It is found in the apical cell membrane. The enzyme catalyses (S)-lactate(out) + 2 Na(+)(out) = (S)-lactate(in) + 2 Na(+)(in). It carries out the reaction propanoate(out) + 2 Na(+)(out) = propanoate(in) + 2 Na(+)(in). The catalysed reaction is pyruvate(out) + 2 Na(+)(out) = pyruvate(in) + 2 Na(+)(in). It catalyses the reaction acetate(out) + 2 Na(+)(out) = acetate(in) + 2 Na(+)(in). The enzyme catalyses butanoate(out) + 2 Na(+)(out) = butanoate(in) + 2 Na(+)(in). It carries out the reaction nicotinate(out) + 2 Na(+)(out) = nicotinate(in) + 2 Na(+)(in). The catalysed reaction is (R)-3-hydroxybutanoate(out) + 2 Na(+)(out) = (R)-3-hydroxybutanoate(in) + 2 Na(+)(in). It catalyses the reaction acetoacetate(out) + 2 Na(+)(out) = acetoacetate(in) + 2 Na(+)(in). The enzyme catalyses 4-methyl-2-oxopentanoate(out) + 2 Na(+)(out) = 4-methyl-2-oxopentanoate(in) + 2 Na(+)(in). It carries out the reaction 5-oxo-L-proline(out) + 2 Na(+)(out) = 5-oxo-L-proline(in) + 2 Na(+)(in). The catalysed reaction is iodide(out) = iodide(in). It catalyses the reaction chloride(in) = chloride(out). The enzyme catalyses nitrate(in) = nitrate(out). It carries out the reaction bromide(in) = bromide(out). Increase of iodide influx inhibited by addition of perchlorate (NaClO(4)), a competitive inhibitor of iodide uptake catalyzed by sodium iodide symporter (NIS). Cotransport of monocarboxylates and nicotinate strongly inhibited by probenecid, nonsteroid anti-inflammatory drugs (ibuprofen, fenoprofen, ketprofen, naproxen) in a Na(+)-dependent manner or by prolonged exposure to external concentrations of monocarboxylates. Its function is as follows. Acts as an electrogenic sodium (Na(+)) and chloride (Cl-)-dependent sodium-coupled solute transporter, including transport of monocarboxylates (short-chain fatty acids including L-lactate, D-lactate, pyruvate, acetate, propionate, valerate and butyrate), mocarboxylate drugs (nicotinate, benzoate, salicylate and 5-aminosalicylate) and ketone bodies (beta-D-hydroxybutyrate, acetoacetate and alpha-ketoisocaproate), with a Na(+):substrate stoichiometry of between 4:1 and 2:1. Catalyzes passive carrier mediated diffusion of iodide. Mediates iodide transport from the thyrocyte into the colloid lumen through the apical membrane. May be responsible for the absorption of D-lactate and monocarboxylate drugs from the intestinal tract. Acts as a tumor suppressor, suppressing colony formation in colon cancer, prostate cancer and glioma cell lines. May play a critical role in the entry of L-lactate and ketone bodies into neurons by a process driven by an electrochemical Na(+) gradient and hence contribute to the maintenance of the energy status and function of neurons. Mediates sodium-coupled electrogenic transport of pyroglutamate (5-oxo-L-proline). Can mediate the transport of chloride, bromide, iodide and nitrate ions when the external concentration of sodium ions is reduced. This Homo sapiens (Human) protein is Sodium-coupled monocarboxylate transporter 1.